Reading from the N-terminus, the 250-residue chain is Eukaryotic translation initiation factor 2 subunit 2 (250 aa).

The C4-type zinc finger occupies 193–217 (CHTCKSPETQLTKDTRLFFLQCTNC).

This sequence belongs to the eIF-2-beta/eIF-5 family. In terms of assembly, eukaryotic translation initiation factor 2 eIF2 is a heterotrimeric complex composed of an alpha, a beta and a gamma subunit.

The protein resides in the cytoplasm. The protein localises to the cytosol. Functionally, component of the eIF2 complex that functions in the early steps of protein synthesis by forming a ternary complex with GTP and initiator tRNA. This complex binds to a 40S ribosomal subunit, followed by mRNA binding to form a 43S pre-initiation complex (43S PIC). Junction of the 60S ribosomal subunit to form the 80S initiation complex is preceded by hydrolysis of the GTP bound to eIF2 and release of an eIF2-GDP binary complex. In order for eIF2 to recycle and catalyze another round of initiation, the GDP bound to eIF2 must exchange with GTP by way of a reaction catalyzed by eIF2B. The chain is Eukaryotic translation initiation factor 2 subunit 2 from Caenorhabditis elegans.